We begin with the raw amino-acid sequence, 465 residues long: uncharacterized protein (465 aa).

Positions 13 to 71 (GPRPGLRLELQAIDLDRDGHGLARWQGWVVVVPGLLPGERAKVQLQQRQKSRWLSRISE) constitute a TRAM domain. Residues C84, C90, C93, and C171 each contribute to the [4Fe-4S] cluster site. 4 residues coordinate S-adenosyl-L-methionine: Q294, Y324, E345, and D391. C418 functions as the Nucleophile in the catalytic mechanism.

The protein belongs to the class I-like SAM-binding methyltransferase superfamily. RNA M5U methyltransferase family.

This is an uncharacterized protein from Parasynechococcus marenigrum (strain WH8102).